Consider the following 371-residue polypeptide: Protein SOMBRERO (371 aa).

One can recognise an NAC domain in the interval 17 to 166 (VPPGFRFHPT…GWVVCRVFKK (150 aa)). Residues 118–172 (IGLRKTLVFYTGRAPHGQKTEWIMHEYRLDDSENEIQEDGWVVCRVFKKKNHFRG) mediate DNA binding. 2 disordered regions span residues 176 to 213 (EQEQDHHHHHQYISTNNDHDHHHHIDSNSNNHSPLILH) and 316 to 355 (VQNHQAKCFGDLSNNDNNDQADHLGNNNGGSSSSPVNQRF). The span at 192–201 (NDHDHHHHID) shows a compositional bias: basic and acidic residues. Low complexity-rich tracts occupy residues 202 to 213 (SNSNNHSPLILH) and 340 to 349 (GNNNGGSSSS).

As to expression, accumulates in maturing root cap cells, in both COL and LRC cells.

The protein localises to the nucleus. Its function is as follows. Transcription regulator. Together with BRN1 and BRN2, regulates cellular maturation of root cap. Represses stem cell-like divisions in the root cap daughter cells, and thus promotes daughter cell fate. Inhibits expression of its positive regulator FEZ in a feedback loop for controlled switches in cell division plane. Promotes the expression of genes involved in secondary cell walls (SCW) biosynthesis. In Arabidopsis thaliana (Mouse-ear cress), this protein is Protein SOMBRERO (SMB).